We begin with the raw amino-acid sequence, 220 residues long: Probable nicotinate-nucleotide adenylyltransferase (220 aa).

The protein belongs to the NadD family.

The catalysed reaction is nicotinate beta-D-ribonucleotide + ATP + H(+) = deamido-NAD(+) + diphosphate. The protein operates within cofactor biosynthesis; NAD(+) biosynthesis; deamido-NAD(+) from nicotinate D-ribonucleotide: step 1/1. Its function is as follows. Catalyzes the reversible adenylation of nicotinate mononucleotide (NaMN) to nicotinic acid adenine dinucleotide (NaAD). The protein is Probable nicotinate-nucleotide adenylyltransferase of Saccharophagus degradans (strain 2-40 / ATCC 43961 / DSM 17024).